A 591-amino-acid polypeptide reads, in one-letter code: Aspartate--tRNA(Asp/Asn) ligase (591 aa).

Glutamate 176 serves as a coordination point for L-aspartate. The interval glutamine 200 to lysine 203 is aspartate. L-aspartate is bound at residue arginine 222. Residues arginine 222 to glutamate 224 and glutamine 231 each bind ATP. Histidine 450 contacts L-aspartate. Glutamate 484 is an ATP binding site. Position 491 (arginine 491) interacts with L-aspartate. ATP is bound at residue glycine 536–arginine 539.

It belongs to the class-II aminoacyl-tRNA synthetase family. Type 1 subfamily. Homodimer.

It localises to the cytoplasm. It catalyses the reaction tRNA(Asx) + L-aspartate + ATP = L-aspartyl-tRNA(Asx) + AMP + diphosphate. Functionally, aspartyl-tRNA synthetase with relaxed tRNA specificity since it is able to aspartylate not only its cognate tRNA(Asp) but also tRNA(Asn). Reaction proceeds in two steps: L-aspartate is first activated by ATP to form Asp-AMP and then transferred to the acceptor end of tRNA(Asp/Asn). This Bacillus anthracis (strain CDC 684 / NRRL 3495) protein is Aspartate--tRNA(Asp/Asn) ligase.